The primary structure comprises 346 residues: Dynein regulatory complex protein 9 (346 aa).

The segment covering 299–308 (MEKEQREKNA) has biased composition (basic and acidic residues). Residues 299 to 346 (MEKEQREKNAATKIQAWWRGTLVRKGPRSKKADKSKKKDGKKGKKKRK) are disordered. Positions 305–334 (EKNAATKIQAWWRGTLVRKGPRSKKADKSK) constitute an IQ domain. The segment covering 323–346 (KGPRSKKADKSKKKDGKKGKKKRK) has biased composition (basic residues).

It belongs to the DRC9 family. Component of the nexin-dynein regulatory complex (N-DRC). Interacts (via IQ domain) with calmodulin when calcium levels are low. Does not interact with calmodulin in the presence of Ca(2+). Interacts with hsp70 and may form a complex with camk4 and hsp70. Detected in adult testis, and at lower levels in brain, kidney and ovary.

It is found in the cytoplasm. The protein localises to the cell projection. The protein resides in the cilium. It localises to the flagellum. Its subcellular location is the cytoskeleton. It is found in the flagellum axoneme. Its function is as follows. Component of the nexin-dynein regulatory complex (N-DRC), a key regulator of ciliary/flagellar motility which maintains the alignment and integrity of the distal axoneme and regulates microtubule sliding in motile axonemes. Binds calmodulin when cellular Ca(2+) levels are low and thereby contributes to the regulation of calcium and calmodulin-dependent protein kinase IV (camk4) activity; contributes to the regulation of camk4 signaling cascades. Plays a role in the regulation of definitive hematopoiesis via its effects on camk4. This chain is Dynein regulatory complex protein 9, found in Danio rerio (Zebrafish).